A 417-amino-acid chain; its full sequence is Serine hydroxymethyltransferase (417 aa).

(6S)-5,6,7,8-tetrahydrofolate is bound by residues Leu122 and 126–128; that span reads GHL. At Lys230 the chain carries N6-(pyridoxal phosphate)lysine. Residue 355–357 coordinates (6S)-5,6,7,8-tetrahydrofolate; sequence SPF.

Belongs to the SHMT family. Homodimer. The cofactor is pyridoxal 5'-phosphate.

The protein localises to the cytoplasm. It catalyses the reaction (6R)-5,10-methylene-5,6,7,8-tetrahydrofolate + glycine + H2O = (6S)-5,6,7,8-tetrahydrofolate + L-serine. It functions in the pathway one-carbon metabolism; tetrahydrofolate interconversion. The protein operates within amino-acid biosynthesis; glycine biosynthesis; glycine from L-serine: step 1/1. Functionally, catalyzes the reversible interconversion of serine and glycine with tetrahydrofolate (THF) serving as the one-carbon carrier. This reaction serves as the major source of one-carbon groups required for the biosynthesis of purines, thymidylate, methionine, and other important biomolecules. Also exhibits THF-independent aldolase activity toward beta-hydroxyamino acids, producing glycine and aldehydes, via a retro-aldol mechanism. This is Serine hydroxymethyltransferase from Francisella philomiragia subsp. philomiragia (strain ATCC 25017 / CCUG 19701 / FSC 153 / O#319-036).